The following is a 361-amino-acid chain: UDP-3-O-acylglucosamine N-acyltransferase (361 aa).

The active-site Proton acceptor is the His253.

Belongs to the transferase hexapeptide repeat family. LpxD subfamily. Homotrimer.

It carries out the reaction a UDP-3-O-[(3R)-3-hydroxyacyl]-alpha-D-glucosamine + a (3R)-hydroxyacyl-[ACP] = a UDP-2-N,3-O-bis[(3R)-3-hydroxyacyl]-alpha-D-glucosamine + holo-[ACP] + H(+). The protein operates within bacterial outer membrane biogenesis; LPS lipid A biosynthesis. Catalyzes the N-acylation of UDP-3-O-acylglucosamine using 3-hydroxyacyl-ACP as the acyl donor. Is involved in the biosynthesis of lipid A, a phosphorylated glycolipid that anchors the lipopolysaccharide to the outer membrane of the cell. This Burkholderia pseudomallei (strain 1710b) protein is UDP-3-O-acylglucosamine N-acyltransferase.